We begin with the raw amino-acid sequence, 109 residues long: Flagellar transcriptional regulator FlhD (109 aa).

This sequence belongs to the FlhD family. In terms of assembly, homodimer; disulfide-linked. Forms a heterohexamer composed of two FlhC and four FlhD subunits. Each FlhC binds a FlhD dimer, forming a heterotrimer, and a hexamer assembles by dimerization of two heterotrimers.

The protein localises to the cytoplasm. Its function is as follows. Functions in complex with FlhC as a master transcriptional regulator that regulates transcription of several flagellar and non-flagellar operons by binding to their promoter region. Activates expression of class 2 flagellar genes, including fliA, which is a flagellum-specific sigma factor that turns on the class 3 genes. Also regulates genes whose products function in a variety of physiological pathways. The sequence is that of Flagellar transcriptional regulator FlhD from Acidovorax sp. (strain JS42).